The primary structure comprises 215 residues: 3-isopropylmalate dehydratase small subunit (215 aa).

This sequence belongs to the LeuD family. LeuD type 1 subfamily. In terms of assembly, heterodimer of LeuC and LeuD.

The enzyme catalyses (2R,3S)-3-isopropylmalate = (2S)-2-isopropylmalate. It participates in amino-acid biosynthesis; L-leucine biosynthesis; L-leucine from 3-methyl-2-oxobutanoate: step 2/4. In terms of biological role, catalyzes the isomerization between 2-isopropylmalate and 3-isopropylmalate, via the formation of 2-isopropylmaleate. The sequence is that of 3-isopropylmalate dehydratase small subunit from Hahella chejuensis (strain KCTC 2396).